We begin with the raw amino-acid sequence, 571 residues long: Optineurin (571 aa).

2 disordered regions span residues 1–32 (MSHQ…HPNL) and 100–144 (LSHE…DQLR). Positions 38–170 (EELLQQMKEL…VSELQLKLNS (133 aa)) form a coiled coil. Positions 58–209 (MKLNNQAMKG…GPTRTVSIGT (152 aa)) are interaction with Rab8. Basic and acidic residues-rich tracts occupy residues 100–123 (LSHE…RSSE) and 130–143 (RLPR…KDQL). An LIR motif is present at residues 176 to 181 (DSFVEI). A Phosphoserine; by TBK1 modification is found at serine 177. Over residues 186–197 (GEAEGSVKEIKH) the composition is skewed to basic and acidic residues. Disordered regions lie at residues 186-210 (GEAE…IGTS) and 255-291 (VSDF…TVGS). Serine 198 bears the Phosphoserine mark. Positions 201–210 (PTRTVSIGTS) are enriched in polar residues. Residues 233 to 502 (CLREGNQKVE…LLKENDAFED (270 aa)) adopt a coiled-coil conformation. Composition is skewed to basic and acidic residues over residues 255–268 (VSDF…RSEI) and 275–286 (STEKENEEEKGP). Serine 336 is subject to Phosphoserine. An interaction with HD region spans residues 405-571 (TRKESEKVDR…LQIHVMDCII (167 aa)). Residues 406–514 (RKESEKVDRA…RQSLMEMQSR (109 aa)) are interaction with MYO6. Residues 468–473 (DFHAER) carry the UBAN motif. Serine 520 is subject to Phosphoserine. A CCHC NOA-type zinc finger spans residues 541–571 (QRNIPIHSCPKCGEVLPDIDTLQIHVMDCII). The Zn(2+) site is built by cysteine 549, cysteine 552, histidine 565, and cysteine 569.

Self-associates. Interacts with HD. Interacts with GTF3A. Interacts with MYO6. Interacts (via UBAN) with ubiquitinated TFRC. Interacts with GTP-bound Rab8 (RAB8A and/or RAB8B). Interacts with TBC1D17. Interacts with TBK1. Interacts with TRAF3. Binds to linear ubiquitin chains. Interacts with LC3 family members MAP1LC3A, MAP1LC3B, GABARAP, GABARAPL1 and GABARAPL2; OPTN phosphorylation increases the association (at least with MAP1LC3B). Interacts with RAB12; the interaction may be indirect. Interacts with TBK1; this interaction leads to the Golgi localization of TBK1 and its subsequent activation. Interacts with palmitoyltransferase ZDHHC17/HIP14; the interaction does not lead to palmitoylation of OPTN. Interacts with CYLD. Interacts with TOM1; the interaction is indirect and is mediated by MYO6, which acts as a bridge between TOM1 and OPTN. Interacts with USP12; the interaction is independent of USP12 deubiquitinase activity and may be involved in regulation of autophagic flux. In terms of processing, phosphorylated by TBK1, leading to restrict bacterial proliferation in case of infection.

Its subcellular location is the cytoplasm. The protein localises to the perinuclear region. It localises to the golgi apparatus. The protein resides in the trans-Golgi network. It is found in the cytoplasmic vesicle. Its subcellular location is the autophagosome. The protein localises to the recycling endosome. Plays an important role in the maintenance of the Golgi complex, in membrane trafficking, in exocytosis, through its interaction with myosin VI and Rab8. Links myosin VI to the Golgi complex and plays an important role in Golgi ribbon formation. Negatively regulates the induction of IFNB in response to RNA virus infection. Plays a neuroprotective role in the eye and optic nerve. Probably part of the TNF-alpha signaling pathway that can shift the equilibrium toward induction of cell death. May act by regulating membrane trafficking and cellular morphogenesis via a complex that contains Rab8 and huntingtin (HD). Mediates the interaction of Rab8 with the probable GTPase-activating protein TBC1D17 during Rab8-mediated endocytic trafficking, such as that of transferrin receptor (TFRC/TfR); regulates Rab8 recruitment to tubules emanating from the endocytic recycling compartment. Autophagy receptor that interacts directly with both the cargo to become degraded and an autophagy modifier of the MAP1 LC3 family; targets ubiquitin-coated bacteria (xenophagy) and appears to function in the same pathway as SQSTM1 and CALCOCO2/NDP52. The sequence is that of Optineurin (OPTN) from Macaca fascicularis (Crab-eating macaque).